The chain runs to 49 residues: Toxic protein HokB (49 aa).

A helical membrane pass occupies residues 4–24 (NPLVVCLLIICITILTFTLLT).

It belongs to the Hok/Gef family.

It is found in the cell inner membrane. Toxic component of a type I toxin-antitoxin (TA) system. When overexpressed kills cells within minutes; causes collapse of the transmembrane potential and arrest of respiration. Expression leads to membrane depolarization; when protein levels are high enough depolarization probably leads to lowered metabolic activity which in turn induces some cells to enter the persistent state in which they transiently survive antibiotic exposure. Its toxic effect is probably neutralized by antisense antitoxin RNA SokB, which is encoded in trans on the opposite DNA strand. The sequence is that of Toxic protein HokB from Escherichia coli (strain K12).